The sequence spans 419 residues: Histidine--tRNA ligase (419 aa).

This sequence belongs to the class-II aminoacyl-tRNA synthetase family. Homodimer.

Its subcellular location is the cytoplasm. It catalyses the reaction tRNA(His) + L-histidine + ATP = L-histidyl-tRNA(His) + AMP + diphosphate + H(+). In Synechococcus sp. (strain JA-3-3Ab) (Cyanobacteria bacterium Yellowstone A-Prime), this protein is Histidine--tRNA ligase.